A 453-amino-acid chain; its full sequence is Bifunctional protein GlmU (453 aa).

Residues 1–226 (MKFSTVILAA…SIEVEGVNDR (226 aa)) are pyrophosphorylase. Residues 8-11 (LAAG), Lys22, Gln73, 78-79 (GT), 100-102 (YGD), Gly137, Glu151, Asn166, and Asn224 each bind UDP-N-acetyl-alpha-D-glucosamine. Mg(2+) is bound at residue Asp102. A Mg(2+)-binding site is contributed by Asn224. The interval 227–247 (IQLARLERAFQARQAKKLLEQ) is linker. The segment at 248 to 453 (GVMLRDPARF…AGWQRPAKKK (206 aa)) is N-acetyltransferase. Residues Arg330 and Lys348 each contribute to the UDP-N-acetyl-alpha-D-glucosamine site. His360 serves as the catalytic Proton acceptor. The UDP-N-acetyl-alpha-D-glucosamine site is built by Tyr363 and Asn374. Acetyl-CoA contacts are provided by residues Ala377, 383–384 (NY), Ser402, Ala420, and Arg437.

It in the N-terminal section; belongs to the N-acetylglucosamine-1-phosphate uridyltransferase family. This sequence in the C-terminal section; belongs to the transferase hexapeptide repeat family. Homotrimer. It depends on Mg(2+) as a cofactor.

The protein resides in the cytoplasm. The catalysed reaction is alpha-D-glucosamine 1-phosphate + acetyl-CoA = N-acetyl-alpha-D-glucosamine 1-phosphate + CoA + H(+). It carries out the reaction N-acetyl-alpha-D-glucosamine 1-phosphate + UTP + H(+) = UDP-N-acetyl-alpha-D-glucosamine + diphosphate. The protein operates within nucleotide-sugar biosynthesis; UDP-N-acetyl-alpha-D-glucosamine biosynthesis; N-acetyl-alpha-D-glucosamine 1-phosphate from alpha-D-glucosamine 6-phosphate (route II): step 2/2. It participates in nucleotide-sugar biosynthesis; UDP-N-acetyl-alpha-D-glucosamine biosynthesis; UDP-N-acetyl-alpha-D-glucosamine from N-acetyl-alpha-D-glucosamine 1-phosphate: step 1/1. Its pathway is bacterial outer membrane biogenesis; LPS lipid A biosynthesis. Its function is as follows. Catalyzes the last two sequential reactions in the de novo biosynthetic pathway for UDP-N-acetylglucosamine (UDP-GlcNAc). The C-terminal domain catalyzes the transfer of acetyl group from acetyl coenzyme A to glucosamine-1-phosphate (GlcN-1-P) to produce N-acetylglucosamine-1-phosphate (GlcNAc-1-P), which is converted into UDP-GlcNAc by the transfer of uridine 5-monophosphate (from uridine 5-triphosphate), a reaction catalyzed by the N-terminal domain. The polypeptide is Bifunctional protein GlmU (Vibrio cholerae serotype O1 (strain M66-2)).